An 825-amino-acid chain; its full sequence is Glycerol-3-phosphate acyltransferase (825 aa).

Positions 304–309 match the HXXXXD motif motif; that stretch reads CHRSHM. Positions 803–825 are disordered; sequence MPAETSNQPEAPETPEPEGKTES.

This sequence belongs to the GPAT/DAPAT family.

Its subcellular location is the cell inner membrane. The enzyme catalyses sn-glycerol 3-phosphate + an acyl-CoA = a 1-acyl-sn-glycero-3-phosphate + CoA. It participates in phospholipid metabolism; CDP-diacylglycerol biosynthesis; CDP-diacylglycerol from sn-glycerol 3-phosphate: step 1/3. The protein is Glycerol-3-phosphate acyltransferase of Yersinia pseudotuberculosis serotype O:1b (strain IP 31758).